A 401-amino-acid chain; its full sequence is Mu-type opioid receptor (401 aa).

The Extracellular portion of the chain corresponds to Met1–Val69. 5 N-linked (GlcNAc...) asparagine glycosylation sites follow: Asn9, Asn12, Asn34, Asn41, and Asn49. The helical transmembrane segment at Thr70–Tyr94 threads the bilayer. The Cytoplasmic portion of the chain corresponds to Val95–Asn107. Residues Ile108–Leu132 form a helical membrane-spanning segment. The Extracellular portion of the chain corresponds to Met133–Cys143. An intrachain disulfide couples Cys143 to Cys220. A helical transmembrane segment spans residues Lys144–Val166. The Cytoplasmic portion of the chain corresponds to Asp167–Asn186. Tyr169 carries the phosphotyrosine modification. A helical membrane pass occupies residues Ala187–Met208. The Extracellular segment spans residues Ala209–Trp231. A helical membrane pass occupies residues Glu232–Gly256. Topologically, residues Leu257 to Arg280 are cytoplasmic. Residues Ile281–Ala307 traverse the membrane as a helical segment. The Extracellular portion of the chain corresponds to Leu308 to Thr315. A helical membrane pass occupies residues Phe316 to Tyr339. Positions Asn335–Tyr339 match the NPxxY; plays a role in stabilizing the activated conformation of the receptor motif. At Ala340–Pro401 the chain is on the cytoplasmic side. A lipid anchor (S-palmitoyl cysteine) is attached at Cys354. The tract at residues Asn365–Arg385 is disordered. Ser366 is modified (phosphoserine). Thr373 is modified (phosphothreonine). Ser378 is modified (phosphoserine). Thr397 is subject to Phosphothreonine.

This sequence belongs to the G-protein coupled receptor 1 family. As to quaternary structure, forms homooligomers and heterooligomers with other GPCRs, such as OPRD1, OPRK1, OPRL1, NPFFR2, ADRA2A, SSTR2, CNR1 and CCR5 (probably in dimeric forms). Interacts with heterotrimeric G proteins; interaction with a heterotrimeric complex containing GNAI1, GNB1 and GNG2 stabilizes the active conformation of the receptor and increases its affinity for endomorphin-2, the synthetic opioid peptide DAMGO and for morphinan agonists. Interacts with PPL; the interaction disrupts agonist-mediated G-protein activation. Interacts (via C-terminus) with DNAJB4 (via C-terminus). Interacts with calmodulin; the interaction inhibits the constitutive activity of OPRM1; it abolishes basal and attenuates agonist-stimulated G-protein coupling. Interacts with FLNA, PLD2, RANBP9 and WLS and GPM6A. Interacts with RTP4. Interacts with SYP and GNAS. Interacts with RGS9, RGS17, RGS20, RGS4, PPP1R9B and HINT1. Post-translationally, phosphorylated. Differentially phosphorylated in basal and agonist-induced conditions. Agonist-mediated phosphorylation modulates receptor internalization. Phosphorylated by GRK2 in a agonist-dependent manner. Phosphorylation at Tyr-169 requires receptor activation, is dependent on non-receptor protein tyrosine kinase Src and results in a decrease in agonist efficacy by reducing G-protein coupling efficiency. Phosphorylated on tyrosine residues; the phosphorylation is involved in agonist-induced G-protein-independent receptor down-regulation. Phosphorylation at Ser-378 is involved in G-protein-dependent but not beta-arrestin-dependent activation of the ERK pathway. In terms of processing, ubiquitinated. A basal ubiquitination seems not to be related to degradation. Ubiquitination is increased upon formation of OPRM1:OPRD1 oligomers leading to proteasomal degradation; the ubiquitination is diminished by RTP4.

The protein localises to the cell membrane. Its subcellular location is the cell projection. It is found in the axon. It localises to the perikaryon. The protein resides in the dendrite. The protein localises to the endosome. In terms of biological role, receptor for endogenous opioids such as beta-endorphin and endomorphin. Receptor for natural and synthetic opioids including morphine, heroin, DAMGO, fentanyl, etorphine, buprenorphin and methadone. Also activated by enkephalin peptides, such as Met-enkephalin or Met-enkephalin-Arg-Phe, with higher affinity for Met-enkephalin-Arg-Phe. Agonist binding to the receptor induces coupling to an inactive GDP-bound heterotrimeric G-protein complex and subsequent exchange of GDP for GTP in the G-protein alpha subunit leading to dissociation of the G-protein complex with the free GTP-bound G-protein alpha and the G-protein beta-gamma dimer activating downstream cellular effectors. The agonist- and cell type-specific activity is predominantly coupled to pertussis toxin-sensitive G(i) and G(o) G alpha proteins, GNAI1, GNAI2, GNAI3 and GNAO1, and to a lesser extent to pertussis toxin-insensitive G alpha proteins GNAZ and GNA15. They mediate an array of downstream cellular responses, including inhibition of adenylate cyclase activity and both N-type and L-type calcium channels, activation of inward rectifying potassium channels, mitogen-activated protein kinase (MAPK), phospholipase C (PLC), phosphoinositide/protein kinase (PKC), phosphoinositide 3-kinase (PI3K) and regulation of NF-kappa-B. Also couples to adenylate cyclase stimulatory G alpha proteins. The selective temporal coupling to G-proteins and subsequent signaling can be regulated by RGSZ proteins, such as RGS9, RGS17 and RGS4. Phosphorylation by members of the GPRK subfamily of Ser/Thr protein kinases and association with beta-arrestins is involved in short-term receptor desensitization. Beta-arrestins associate with the GPRK-phosphorylated receptor and uncouple it from the G-protein thus terminating signal transduction. The phosphorylated receptor is internalized through endocytosis via clathrin-coated pits which involves beta-arrestins. The activation of the ERK pathway occurs either in a G-protein-dependent or a beta-arrestin-dependent manner and is regulated by agonist-specific receptor phosphorylation. Acts as a class A G-protein coupled receptor (GPCR) which dissociates from beta-arrestin at or near the plasma membrane and undergoes rapid recycling. Receptor down-regulation pathways are varying with the agonist and occur dependent or independent of G-protein coupling. Endogenous ligands induce rapid desensitization, endocytosis and recycling. Heterooligomerization with other GPCRs can modulate agonist binding, signaling and trafficking properties. Involved in neurogenesis. The polypeptide is Mu-type opioid receptor (OPRM1) (Sus scrofa (Pig)).